Reading from the N-terminus, the 313-residue chain is tRNA-cytidine(32) 2-sulfurtransferase (313 aa).

A PP-loop motif motif is present at residues 47–52; sequence SGGKDS. [4Fe-4S] cluster is bound by residues Cys122, Cys125, and Cys213.

This sequence belongs to the TtcA family. As to quaternary structure, homodimer. Mg(2+) is required as a cofactor. It depends on [4Fe-4S] cluster as a cofactor.

The protein localises to the cytoplasm. The enzyme catalyses cytidine(32) in tRNA + S-sulfanyl-L-cysteinyl-[cysteine desulfurase] + AH2 + ATP = 2-thiocytidine(32) in tRNA + L-cysteinyl-[cysteine desulfurase] + A + AMP + diphosphate + H(+). Its pathway is tRNA modification. Functionally, catalyzes the ATP-dependent 2-thiolation of cytidine in position 32 of tRNA, to form 2-thiocytidine (s(2)C32). The sulfur atoms are provided by the cysteine/cysteine desulfurase (IscS) system. This is tRNA-cytidine(32) 2-sulfurtransferase from Yersinia enterocolitica serotype O:8 / biotype 1B (strain NCTC 13174 / 8081).